Reading from the N-terminus, the 181-residue chain is ATP-dependent protease subunit HslV (181 aa).

The active site involves Thr-7. Residues Ala-162, Cys-165, and Thr-168 each contribute to the Na(+) site.

Belongs to the peptidase T1B family. HslV subfamily. A double ring-shaped homohexamer of HslV is capped on each side by a ring-shaped HslU homohexamer. The assembly of the HslU/HslV complex is dependent on binding of ATP.

It localises to the cytoplasm. It catalyses the reaction ATP-dependent cleavage of peptide bonds with broad specificity.. Its activity is regulated as follows. Allosterically activated by HslU binding. Its function is as follows. Protease subunit of a proteasome-like degradation complex believed to be a general protein degrading machinery. This is ATP-dependent protease subunit HslV from Coxiella burnetii (strain Dugway 5J108-111).